The sequence spans 331 residues: Elongation factor Ts, mitochondrial (331 aa).

A mitochondrion-targeting transit peptide spans 1-14 (MIVSRQVIRSVVRK).

It belongs to the EF-Ts family.

It localises to the mitochondrion. Functionally, associates with the EF-Tu.GDP complex and induces the exchange of GDP to GTP. It remains bound to the aminoacyl-tRNA.EF-Tu.GTP complex up to the GTP hydrolysis stage on the ribosome. The chain is Elongation factor Ts, mitochondrial from Brugia malayi (Filarial nematode worm).